We begin with the raw amino-acid sequence, 177 residues long: Large ribosomal subunit protein uL6 (177 aa).

Belongs to the universal ribosomal protein uL6 family. As to quaternary structure, part of the 50S ribosomal subunit.

In terms of biological role, this protein binds to the 23S rRNA, and is important in its secondary structure. It is located near the subunit interface in the base of the L7/L12 stalk, and near the tRNA binding site of the peptidyltransferase center. The chain is Large ribosomal subunit protein uL6 from Rickettsia massiliae (strain Mtu5).